A 60-amino-acid polypeptide reads, in one-letter code: Small, acid-soluble spore protein H 1 (60 aa).

Positions 39–60 (IHPLDNPNQKQSVPVASLEEHS) are disordered.

Belongs to the SspH family.

It is found in the spore core. In Geobacillus kaustophilus (strain HTA426), this protein is Small, acid-soluble spore protein H 1.